A 473-amino-acid chain; its full sequence is Adenosylhomocysteinase (473 aa).

The substrate site is built by Thr64, Asp139, and Glu199. Residue 200–202 (TTT) coordinates NAD(+). Positions 229 and 233 each coordinate substrate. Residues Asn234, 263-268 (GYGDVG), Glu286, Asn321, 342-344 (IGH), and Asn387 contribute to the NAD(+) site.

It belongs to the adenosylhomocysteinase family. NAD(+) is required as a cofactor.

The protein localises to the cytoplasm. The enzyme catalyses S-adenosyl-L-homocysteine + H2O = L-homocysteine + adenosine. It participates in amino-acid biosynthesis; L-homocysteine biosynthesis; L-homocysteine from S-adenosyl-L-homocysteine: step 1/1. Its function is as follows. May play a key role in the regulation of the intracellular concentration of adenosylhomocysteine. This is Adenosylhomocysteinase from Paraburkholderia xenovorans (strain LB400).